Reading from the N-terminus, the 250-residue chain is Triosephosphate isomerase, glycosomal (250 aa).

Substrate-binding residues include Asn11 and Lys13. His95 functions as the Electrophile in the catalytic mechanism. The active-site Proton acceptor is the Glu167.

This sequence belongs to the triosephosphate isomerase family. In terms of assembly, homodimer.

It localises to the glycosome. The catalysed reaction is D-glyceraldehyde 3-phosphate = dihydroxyacetone phosphate. It functions in the pathway carbohydrate biosynthesis; gluconeogenesis. Its pathway is carbohydrate degradation; glycolysis; D-glyceraldehyde 3-phosphate from glycerone phosphate: step 1/1. The polypeptide is Triosephosphate isomerase, glycosomal (Trypanosoma brucei brucei).